The chain runs to 192 residues: uncharacterized protein (192 aa).

Residues 53-111 (CLKESVERARKVYLSLLKDYERKSREYEKAYENYLKELRTYRETLYRIKEDLKFYERIC) adopt a coiled-coil conformation.

This is an uncharacterized protein from Aquifex aeolicus (strain VF5).